A 217-amino-acid polypeptide reads, in one-letter code: Cytochrome b5 domain-containing protein 1 (217 aa).

Residues 6–72 enclose the Cytochrome b5 heme-binding domain; it reads PRYFTPREVS…NPKTGDVKTH (67 aa). 2 residues coordinate heme: His-41 and His-72.

This sequence belongs to the cytochrome b5 family.

Its subcellular location is the cytoplasm. It localises to the cytoskeleton. It is found in the cilium axoneme. Radial spoke stalk protein that binds heme under oxidizing conditions. Required for the coordinated beating of multiple cilia maybe by functioning in a redox signaling pathway. In Xenopus laevis (African clawed frog), this protein is Cytochrome b5 domain-containing protein 1 (cyb5d1).